A 126-amino-acid polypeptide reads, in one-letter code: Small ribosomal subunit protein uS12 (126 aa).

Asp89 bears the 3-methylthioaspartic acid mark. Residues 99-126 are disordered; it reads RGSLDTSGVNDRKQGRSKYGTKKPKDKK. Positions 113–126 are enriched in basic residues; that stretch reads GRSKYGTKKPKDKK.

This sequence belongs to the universal ribosomal protein uS12 family. In terms of assembly, part of the 30S ribosomal subunit. Contacts proteins S8 and S17. May interact with IF1 in the 30S initiation complex.

In terms of biological role, with S4 and S5 plays an important role in translational accuracy. Its function is as follows. Interacts with and stabilizes bases of the 16S rRNA that are involved in tRNA selection in the A site and with the mRNA backbone. Located at the interface of the 30S and 50S subunits, it traverses the body of the 30S subunit contacting proteins on the other side and probably holding the rRNA structure together. The combined cluster of proteins S8, S12 and S17 appears to hold together the shoulder and platform of the 30S subunit. The protein is Small ribosomal subunit protein uS12 of Legionella pneumophila (strain Paris).